A 302-amino-acid polypeptide reads, in one-letter code: NmrA-like family domain-containing protein DDB_G0286605 (302 aa).

Residues 9-14 (GGTGYQ), 35-39 (RNPES), 56-57 (DE), 78-80 (TNS), Lys-130, and 157-160 (YFQN) contribute to the NADP(+) site.

Belongs to the NmrA-type oxidoreductase family.

Functionally, may be a redox sensor protein. The protein is NmrA-like family domain-containing protein DDB_G0286605 of Dictyostelium discoideum (Social amoeba).